The sequence spans 474 residues: Trehalose-6-phosphate synthase (474 aa).

Arginine 10 contributes to the D-glucose 6-phosphate binding site. Residue 22–23 participates in UDP-alpha-D-glucose binding; that stretch reads GG. D-glucose 6-phosphate contacts are provided by tyrosine 77 and aspartate 131. The UDP-alpha-D-glucose site is built by arginine 263 and lysine 268. Arginine 301 is a binding site for D-glucose 6-phosphate. Residues phenylalanine 340 and 366 to 370 each bind UDP-alpha-D-glucose; that span reads LVAKE.

This sequence belongs to the glycosyltransferase 20 family. Homotetramer.

The catalysed reaction is D-glucose 6-phosphate + UDP-alpha-D-glucose = alpha,alpha-trehalose 6-phosphate + UDP + H(+). The protein operates within glycan biosynthesis; trehalose biosynthesis. Its function is as follows. Probably involved in the osmoprotection via the biosynthesis of trehalose. Catalyzes the transfer of glucose from UDP-alpha-D-glucose (UDP-Glc) to D-glucose 6-phosphate (Glc-6-P) to form trehalose-6-phosphate. Acts with retention of the anomeric configuration of the UDP-sugar donor. This is Trehalose-6-phosphate synthase from Cronobacter sakazakii (strain ATCC BAA-894) (Enterobacter sakazakii).